Consider the following 161-residue polypeptide: Protein ZMO0507 (161 aa).

The protein belongs to the free Met sulfoxide reductase family.

The sequence is that of Protein ZMO0507 from Zymomonas mobilis subsp. mobilis (strain ATCC 31821 / ZM4 / CP4).